Here is a 1042-residue protein sequence, read N- to C-terminus: Protein phosphatase Slingshot homolog 1 (1042 aa).

Positions 1 to 12 (MALVTLQRSPTP) are enriched in polar residues. The tract at residues 1-29 (MALVTLQRSPTPSAASSSASNSELEAGSD) is disordered. The residue at position 2 (A2) is an N-acetylalanine. The segment covering 13-22 (SAASSSASNS) has biased composition (low complexity). A phosphoserine mark is found at S37 and S57. In terms of domain architecture, DEK-C spans 249–304 (ERTERLIKAKLRSIMMSQDLENVTSKEIRNELEKQMNCNLKEFKEFIDNEMLLILG). In terms of domain architecture, Tyrosine-protein phosphatase spans 308-449 (KPSLIFDHLY…LSEYEGILDA (142 aa)). C393 acts as the Phosphocysteine intermediate in catalysis. Position 516 is a phosphoserine (S516). Disordered regions lie at residues 576-609 (FGNSKPRSDSLPQVEELEKDGSPRTGRWRRASTQ), 668-766 (MERH…PHCD), 858-900 (IPEE…LDHT), and 915-942 (PTSSSISSNLTRSSSSDSIHSVRGKPGL). The span at 675–693 (SSSAICTQPTFLPHVTSSP) shows a compositional bias: polar residues. Low complexity predominate over residues 697 to 712 (ASSRSRAPERPASGPA). Residues 886 to 900 (LQKSPTSTLPRLDHT) show a composition bias toward polar residues. A Phosphoserine modification is found at S889. An interaction with YWHAG region spans residues 889–1042 (SPTSTLPRLD…LKSPSRVNKS (154 aa)). Low complexity predominate over residues 917–935 (SSSISSNLTRSSSSDSIHS). S970 carries the post-translational modification Phosphoserine. Positions 985-995 (SSEADTSTIAD) are enriched in polar residues. The interval 985–1042 (SSEADTSTIADSQDAKCGLSSSFLPEPQSAPRDPAATSKSSGKSAPEHLKSPSRVNKS) is disordered.

The protein belongs to the protein-tyrosine phosphatase family. In terms of assembly, interacts with the 14-3-3 proteins YWHAB, YWHAG, YWHAQ, and YWHAZ. Interaction with 14-3-3 proteins inhibits phosphatase activity and also blocks recruitment to lamellipodia and stimulation by actin. Interacts with actin and this stimulates phosphatase activity. Interacts with LIMK1. Phosphorylated. Inhibitory phosphorylation by PAK4 promotes binding to YWHAZ. Phosphorylation at Ser-970 is decreased by stimuli which promote actin reorganization and lamellipodia formation. Can be dephosphorylated and activated by PPP3CA/calcineurin A. Phosphorylation decreases immediately prior to telophase. As to expression, expressed in brain, heart, kidney and thymus. Also expressed at lower levels in liver, skeletal muscle, small intestine and spleen.

The protein localises to the cytoplasm. It is found in the cytoskeleton. The protein resides in the cleavage furrow. It localises to the midbody. The enzyme catalyses O-phospho-L-tyrosyl-[protein] + H2O = L-tyrosyl-[protein] + phosphate. It carries out the reaction O-phospho-L-seryl-[protein] + H2O = L-seryl-[protein] + phosphate. The catalysed reaction is O-phospho-L-threonyl-[protein] + H2O = L-threonyl-[protein] + phosphate. Functionally, protein phosphatase which regulates actin filament dynamics. Dephosphorylates and activates the actin binding/depolymerizing factor cofilin, which subsequently binds to actin filaments and stimulates their disassembly. Inhibitory phosphorylation of cofilin is mediated by LIMK1, which may also be dephosphorylated and inactivated by this protein. In Mus musculus (Mouse), this protein is Protein phosphatase Slingshot homolog 1.